The following is a 237-amino-acid chain: ADTIVAVELDSYPNTDIGDPNYPHIGIDIKSVRSKSTARWNMQTGKVGTVHISYNSVSKRLSAVVSYSGSSSTTVSYDVDLNNVLPEWVRVGLSATTGLYKQTNTILSWSFTSKLKTNSIADENSLHFSFHKFSQNPKDLILQGDASTDSDGNLQLTKVSSSGDPQGNSVGRALFYAPVHIWEKSAVVASFDATFTFLIKSPDREPADGITFFIANTDTTIPSGSGGRLLGLFPDAN.

2 residues coordinate Mn(2+): glutamate 8 and aspartate 10. Residues aspartate 10, tyrosine 12, asparagine 14, and aspartate 19 each coordinate Ca(2+). A carbohydrate is bound by residues tyrosine 12 and asparagine 14. Residues aspartate 19 and histidine 24 each contribute to the Mn(2+) site. Glycine 98–tyrosine 100 provides a ligand contact to a carbohydrate. Aspartate 208 serves as a coordination point for Ca(2+). A carbohydrate contacts are provided by glycine 227 and arginine 228.

Belongs to the leguminous lectin family. Homotetramer; dimer of dimers. Post-translationally, concanavalin A-like lectins of the Diocleinae subtribe undergo proteolytic processing referred to as circular permutation. The propeptide is split into an N-terminal and a C-terminal part, the gamma and beta chain, respectively. These are then religated in beta-gamma order to form the mature alpha chain. The beta and gamma chains can often be detected in cell extracts. Residues 1-118 of the mature chain, as displayed here, probably constitute the beta chain in the propeptide, residues 119-237 the gamma chain.

D-mannose/D-glucose-binding lectin with hemagglutinating activity towards rabbit and human erythrocytes. In rats, induces dose-dependent paw edema. Has low cytotoxicity against Artemisia sp. In Macropsychanthus comosus (Sea purse), this protein is Lectin.